A 75-amino-acid polypeptide reads, in one-letter code: Exodeoxyribonuclease 7 small subunit (75 aa).

This sequence belongs to the XseB family. Heterooligomer composed of large and small subunits.

Its subcellular location is the cytoplasm. It catalyses the reaction Exonucleolytic cleavage in either 5'- to 3'- or 3'- to 5'-direction to yield nucleoside 5'-phosphates.. Its function is as follows. Bidirectionally degrades single-stranded DNA into large acid-insoluble oligonucleotides, which are then degraded further into small acid-soluble oligonucleotides. This chain is Exodeoxyribonuclease 7 small subunit, found in Caldanaerobacter subterraneus subsp. tengcongensis (strain DSM 15242 / JCM 11007 / NBRC 100824 / MB4) (Thermoanaerobacter tengcongensis).